A 592-amino-acid polypeptide reads, in one-letter code: Probable auxin efflux carrier component 1c (592 aa).

Over 1-6 the chain is Extracellular; it reads MITGAD. Residues 7–27 traverse the membrane as a helical segment; sequence FYHVMTAMVPLYVAMILAYGS. The Cytoplasmic segment spans residues 28 to 38; that stretch reads VKWWRIFTPDQ. Residues 39 to 59 traverse the membrane as a helical segment; sequence CSGINRFVALFAVPLLSFHFI. Valine 51 contacts (indol-3-yl)acetate. Residues 60 to 70 are Extracellular-facing; sequence STNNPYTMNLR. A helical membrane pass occupies residues 71–91; it reads FIAADTLQKLIVLALLTLWSH. The Cytoplasmic segment spans residues 92–100; sequence LSRRGSLEW. The chain crosses the membrane as a helical span at residues 101–121; that stretch reads TITLFSLSTLPNTLVMGIPLL. Residues asparagine 112 and leucine 114 each coordinate (indol-3-yl)acetate. The Extracellular segment spans residues 122–131; sequence KGMYGEFSGS. Residues 132 to 152 form a helical membrane-spanning segment; the sequence is LMVQIVVLQCIIWYTLMLFMF. Tyrosine 145 contacts (indol-3-yl)acetate. The Cytoplasmic segment spans residues 153-452; it reads EYRGARILIT…LIRNPNTYSS (300 aa). Disordered regions lie at residues 214–236 and 282–331; these read RSDV…SNLT and GATP…AKGE. Positions 224–236 are enriched in polar residues; sequence GFSSTTPRPSNLT. A compositionally biased stretch (pro residues) spans 309–318; the sequence is APNPAMAAPP. The chain crosses the membrane as a helical span at residues 453 to 473; sequence LIGLIWSLVCFRWNFEMPAII. The Extracellular segment spans residues 474–476; that stretch reads LKS. The helical transmembrane segment at 477 to 497 threads the bilayer; it reads ISILSDAGLGMAMFSLGLFMA. At 498–511 the chain is on the cytoplasmic side; that stretch reads LQPRIIACGNKVAT. The helical transmembrane segment at 512 to 532 threads the bilayer; the sequence is FAMAVRFLTGPAVMAAASIAV. The Extracellular segment spans residues 533–537; sequence GLRGT. The helical transmembrane segment at 538–558 threads the bilayer; it reads LLHVAIVQAALPQGIVPFVFA. The (indol-3-yl)acetate site is built by isoleucine 552 and valine 553. The Cytoplasmic portion of the chain corresponds to 559-571; it reads KEYSVHPDILSTA. The chain crosses the membrane as a helical span at residues 572-592; sequence VIFGMLIALPITLVYYILLGL.

The protein belongs to the auxin efflux carrier (TC 2.A.69.1) family. In terms of assembly, homodimer. In terms of tissue distribution, expressed at low levels in roots and leaves. Expressed in roots, stem bases, stems, leaves and young panicles.

It localises to the membrane. Its function is as follows. May act as a component of the auxin efflux carrier. This is Probable auxin efflux carrier component 1c from Oryza sativa subsp. japonica (Rice).